The chain runs to 337 residues: Outer membrane protein U (337 aa).

A signal peptide spans 1–21 (MKKTLIALSVSAAAMATGVNA).

This sequence belongs to the Gram-negative porin family. In terms of assembly, homotrimer.

The protein resides in the cell outer membrane. Forms pores that allow passive diffusion of small molecules across the outer membrane. The chain is Outer membrane protein U (ompU) from Vibrio parahaemolyticus serotype O3:K6 (strain RIMD 2210633).